The primary structure comprises 295 residues: Protein FAM221A (295 aa).

A compositionally biased stretch (basic and acidic residues) spans 272 to 283 (QERLLKEKEQKR). Residues 272-295 (QERLLKEKEQKRQKNSKPPTTNRP) form a disordered region.

The protein belongs to the FAM221 family.

This is Protein FAM221A (fam221a) from Xenopus tropicalis (Western clawed frog).